We begin with the raw amino-acid sequence, 357 residues long: 3-isopropylmalate dehydrogenase (357 aa).

76–89 (GYQWESLDISVRPE) lines the NAD(+) pocket. Residues R96, R106, R134, and D224 each coordinate substrate. Residues D224, D248, and D252 each coordinate Mg(2+). 282-294 (GSAPDIAGQNIAN) lines the NAD(+) pocket.

The protein belongs to the isocitrate and isopropylmalate dehydrogenases family. LeuB type 1 subfamily. As to quaternary structure, homodimer. It depends on Mg(2+) as a cofactor. Mn(2+) is required as a cofactor.

Its subcellular location is the cytoplasm. It catalyses the reaction (2R,3S)-3-isopropylmalate + NAD(+) = 4-methyl-2-oxopentanoate + CO2 + NADH. The protein operates within amino-acid biosynthesis; L-leucine biosynthesis; L-leucine from 3-methyl-2-oxobutanoate: step 3/4. Catalyzes the oxidation of 3-carboxy-2-hydroxy-4-methylpentanoate (3-isopropylmalate) to 3-carboxy-4-methyl-2-oxopentanoate. The product decarboxylates to 4-methyl-2 oxopentanoate. This chain is 3-isopropylmalate dehydrogenase, found in Hydrogenovibrio crunogenus (strain DSM 25203 / XCL-2) (Thiomicrospira crunogena).